Here is a 241-residue protein sequence, read N- to C-terminus: tRNA pseudouridine synthase A (241 aa).

Asp-51 functions as the Nucleophile in the catalytic mechanism. Tyr-110 provides a ligand contact to substrate.

The protein belongs to the tRNA pseudouridine synthase TruA family. Homodimer.

The enzyme catalyses uridine(38/39/40) in tRNA = pseudouridine(38/39/40) in tRNA. Functionally, formation of pseudouridine at positions 38, 39 and 40 in the anticodon stem and loop of transfer RNAs. This Campylobacter jejuni subsp. doylei (strain ATCC BAA-1458 / RM4099 / 269.97) protein is tRNA pseudouridine synthase A.